Reading from the N-terminus, the 101-residue chain is Osteocalcin (101 aa).

The first 18 residues, 1–18 (MKLAIVLLLLGLAVLCLG), serve as a signal peptide directing secretion. The propeptide occupies 19 to 52 (GKDSQHSASAGDSRSSEAFISRQDSANFARRHKR). The Gla domain occupies 53-99 (SYRYNVARGAAVTSPLESQREVCELNPDCDELADHIGFQEAYRRFYG). Ca(2+)-binding residues include Glu69, Glu73, Glu76, and Asp82. Residues Glu69, Glu73, and Glu76 each carry the 4-carboxyglutamate modification. Cys75 and Cys81 are oxidised to a cystine.

This sequence belongs to the osteocalcin/matrix Gla protein family. Post-translationally, gamma-carboxyglutamate residues are formed by vitamin K dependent carboxylation by GGCX. These residues are essential for the binding of calcium.

The protein resides in the secreted. Functionally, the carboxylated form is one of the main organic components of the bone matrix, which constitutes 1-2% of the total bone protein. The carboxylated form binds strongly to apatite and calcium. This chain is Osteocalcin (bglap), found in Xenopus tropicalis (Western clawed frog).